Reading from the N-terminus, the 684-residue chain is Fidgetin-like protein 2 (684 aa).

Over residues 27–41 (PEQHLDVSSTTSSPA) the composition is skewed to polar residues. Disordered regions lie at residues 27-48 (PEQH…ELYS), 99-179 (PGAF…PHSS), and 292-403 (LDEE…SDPM). The segment covering 160 to 179 (SNLSDSGYSGSSSCSGPHSS) has biased composition (low complexity). Ala-431 provides a ligand contact to ATP.

It belongs to the AAA ATPase family. It depends on Mg(2+) as a cofactor. Highly expressed in vascular endothelial cells and neuronal cells.

It is found in the cytoplasm. The protein localises to the cell cortex. The catalysed reaction is ATP + H2O = ADP + phosphate + H(+). In terms of biological role, microtubule-severing enzyme that negatively regulates cell migration and wound healing. In migrating cells, targets dynamic microtubules (MTs) at the leading edge and severs them, thereby suppressing motility. Negative regulator of axon regeneration that suppresses axonal growth by selectively severing dynamic MTs in the distal axon shaft and growth cone. Contributes to proper cell branching during endothelial and neuronal development. This is Fidgetin-like protein 2 (fignl2) from Danio rerio (Zebrafish).